A 1455-amino-acid chain; its full sequence is Membrane-associated guanylate kinase, WW and PDZ domain-containing protein 2 (1455 aa).

The PDZ 1 domain occupies 17–101; it reads ESVIGRNPEG…PLRLKCVKQG (85 aa). A Guanylate kinase-like domain is found at 109-283; the sequence is RHYLNLRFQK…APVYSQPEEL (175 aa). The segment at 205 to 306 is disordered; it reads PGATPSAEGK…DNEEPDPLPD (102 aa). The segment covering 241–252 has biased composition (low complexity); it reads VVNGNGVVVTPE. Residues 281–296 are compositionally biased toward basic and acidic residues; the sequence is EELKEQMDDTKPTKPE. WW domains follow at residues 302-335 and 348-381; these read DPLP…DPRL and NELP…NPVL. The interval 302-381 is interaction with DDN; the sequence is DPLPDNWEMA…RRTQFENPVL (80 aa). Phosphotyrosine is present on tyrosine 362. 2 PDZ domains span residues 426–510 and 605–683; these read STTL…CRGY and TLTI…HRGG. Serine 686 is modified (phosphoserine). Residues 778 to 860 form the PDZ 4 domain; the sequence is DVHLRRMESG…NGQVNLTVRR (83 aa). Phosphotyrosine is present on tyrosine 827. A disordered region spans residues 869-913; that stretch reads CPENGRSPGSVSTHHSSPRSDYATYTNSNHAAPSSNASPPEGFAS. Serine 884 and serine 885 each carry phosphoserine. The span at 895–908 shows a compositional bias: low complexity; sequence NSNHAAPSSNASPP. Residues 920 to 1010 form the PDZ 5 domain; that stretch reads DVVIHRKENE…SVTLRIIPQE (91 aa). Residues 1011-1040 show a composition bias toward polar residues; that stretch reads ELNSPTSAPSSEKQSPMAQQSPLAQQSPLA. Residues 1011 to 1136 form a disordered region; it reads ELNSPTSAPS…PDTRQYPLSD (126 aa). Serine 1014 is subject to Phosphoserine. A compositionally biased stretch (basic and acidic residues) spans 1067-1083; that stretch reads NSYRSEVKARQDVKPDI. The PDZ 6 domain maps to 1147–1229; sequence TVDMEKGAKG…RVRLLLKRGT (83 aa). The segment at 1231–1455 is disordered; that stretch reads QVPEYDEPAP…LKPGASAASR (225 aa). The span at 1238-1249 shows a compositional bias: low complexity; it reads PAPWSSPAAAAP. Positions 1287 to 1299 are enriched in basic and acidic residues; it reads DIKREHDVRKPKE. Low complexity-rich tracts occupy residues 1346–1363, 1399–1412, and 1422–1433; these read EARA…AARA, ALEA…RAGP, and APARKAAVAPGP.

This sequence belongs to the MAGUK family. Interacts (via its WW domains) with DRPLA. Interacts (via its second PDZ domain) with PTEN (via unphosphorylated C-terminus); this interaction diminishes the degradation rate of PTEN. Interacts (via guanylate kinase domain) with DLGAP1. Interacts (via the PDZ domains) with GRIN2A, GRID2 and NLGN1. Interacts with CTNND2, CTNNB1, MAGUIN-1, ACVR2A, SMAD2 and SMAD3. Part of a complex consisting of MAGI2/ARIP1, ACVR2A, ACVR1B and SMAD3. May interact with HTR2A. Interacts with IGSF9, RAPGEF2 and HTR4. Identified in a complex with ACTN4, CASK, IQGAP1, NPHS1, SPTAN1 and SPTBN1. Found in a complex, at least composed of KIDINS220, MAGI2, NTRK1 and RAPGEF2; the complex is mainly formed at late endosomes in a NGF-dependent manner. Interacts with RAPGEF2; the interaction occurs before or after nerve growth factor (NGF) stimulation. Interacts (via PDZ domain) with KIDINS220 (via C-terminal domain). Interacts with DDN. Interacts with DLL1. Found in a complex with IGSF9B and NLGN2; the interaction with IGSF9B is mediated via the PDZ 5 and PDZ 6 domains, while the interaction with NLGN2 is mediated via the WW1, WW2 and PDZ2 domains. Interacts (via PDZ 6 domain) with USH1G (via SAM domain); the interaction is triggered by phosphorylation of USH1G by CK2 and negatively regulates MAGI2-mediated endocytosis. In terms of tissue distribution, specifically expressed in brain.

It localises to the cytoplasm. The protein resides in the late endosome. It is found in the synapse. The protein localises to the synaptosome. Its subcellular location is the cell membrane. It localises to the cytoskeleton. The protein resides in the microtubule organizing center. It is found in the centrosome. The protein localises to the cell projection. Its subcellular location is the cilium. It localises to the centriole. The protein resides in the photoreceptor inner segment. It is found in the photoreceptor outer segment. In terms of biological role, seems to act as a scaffold molecule at synaptic junctions by assembling neurotransmitter receptors and cell adhesion proteins. Plays a role in nerve growth factor (NGF)-induced recruitment of RAPGEF2 to late endosomes and neurite outgrowth. May play a role in regulating activin-mediated signaling in neuronal cells. Enhances the ability of PTEN to suppress AKT1 activation. Plays a role in receptor-mediated clathrin-dependent endocytosis which is required for ciliogenesis. The sequence is that of Membrane-associated guanylate kinase, WW and PDZ domain-containing protein 2 (MAGI2) from Homo sapiens (Human).